Here is a 96-residue protein sequence, read N- to C-terminus: Small ribosomal subunit protein bS20 (96 aa).

It belongs to the bacterial ribosomal protein bS20 family.

In terms of biological role, binds directly to 16S ribosomal RNA. This Anaplasma phagocytophilum (strain HZ) protein is Small ribosomal subunit protein bS20.